The primary structure comprises 78 residues: NAD(P)H-quinone oxidoreductase subunit L (78 aa).

2 helical membrane passes run 10–30 (LFVI…IPLG) and 48–68 (LLIY…APFL).

This sequence belongs to the complex I NdhL subunit family. NDH-1 can be composed of about 15 different subunits; different subcomplexes with different compositions have been identified which probably have different functions.

It localises to the cellular thylakoid membrane. The catalysed reaction is a plastoquinone + NADH + (n+1) H(+)(in) = a plastoquinol + NAD(+) + n H(+)(out). It carries out the reaction a plastoquinone + NADPH + (n+1) H(+)(in) = a plastoquinol + NADP(+) + n H(+)(out). Its function is as follows. NDH-1 shuttles electrons from an unknown electron donor, via FMN and iron-sulfur (Fe-S) centers, to quinones in the respiratory and/or the photosynthetic chain. The immediate electron acceptor for the enzyme in this species is believed to be plastoquinone. Couples the redox reaction to proton translocation, and thus conserves the redox energy in a proton gradient. Cyanobacterial NDH-1 also plays a role in inorganic carbon-concentration. In Prochlorococcus marinus (strain SARG / CCMP1375 / SS120), this protein is NAD(P)H-quinone oxidoreductase subunit L.